The sequence spans 635 residues: Cationic amino acid transporter 4 (635 aa).

A run of 3 helical transmembrane segments spans residues 42–62, 66–86, and 113–133; these read LTLL…TGAV, VAGP…LLAA, and LWAF…GAAV. Residues Asn-151 and Asn-195 are each glycosylated (N-linked (GlcNAc...) asparagine). The chain crosses the membrane as a helical span at residues 197–217; the sequence is TFSAISLLVILFIVILGFILA. The N-linked (GlcNAc...) asparagine glycan is linked to Asn-221. 5 helical membrane-spanning segments follow: residues 229–249, 270–290, 318–338, 365–385, and 391–411; these read FAPF…YAFV, LAIA…STVL, GFIV…SLLF, QVPV…ALLL, and VQFL…SIIV. Ser-422 and Ser-427 each carry phosphoserine. The helical transmembrane segment at 478 to 498 threads the bilayer; that stretch reads VTWALGVMLASAITIGCVLVF. Asn-500 carries an N-linked (GlcNAc...) asparagine glycan. A run of 3 helical transmembrane segments spans residues 508-528, 539-559, and 567-587; these read WGYI…LLVL, LFQI…NICL, and TWVR…GYGI. Asn-601 carries N-linked (GlcNAc...) asparagine glycosylation.

The protein belongs to the amino acid-polyamine-organocation (APC) superfamily. Cationic amino acid transporter (CAT) (TC 2.A.3.3) family.

Its subcellular location is the membrane. In terms of biological role, involved in the transport of the cationic amino acids (arginine, lysine and ornithine). The sequence is that of Cationic amino acid transporter 4 (SLC7A4) from Homo sapiens (Human).